The following is a 154-amino-acid chain: Putative hydrogenase maturation protease MJ0253 (154 aa).

It belongs to the peptidase A31 family.

The chain is Putative hydrogenase maturation protease MJ0253 from Methanocaldococcus jannaschii (strain ATCC 43067 / DSM 2661 / JAL-1 / JCM 10045 / NBRC 100440) (Methanococcus jannaschii).